The chain runs to 205 residues: Cytochrome c biogenesis ATP-binding export protein CcmA 2 (205 aa).

In terms of domain architecture, ABC transporter spans leucine 2–leucine 205. Position 34–41 (glycine 34–threonine 41) interacts with ATP.

The protein belongs to the ABC transporter superfamily. CcmA exporter (TC 3.A.1.107) family. As to quaternary structure, the complex is composed of two ATP-binding proteins (CcmA) and two transmembrane proteins (CcmB).

Its subcellular location is the cell inner membrane. It carries out the reaction heme b(in) + ATP + H2O = heme b(out) + ADP + phosphate + H(+). Functionally, part of the ABC transporter complex CcmAB involved in the biogenesis of c-type cytochromes; once thought to export heme, this seems not to be the case, but its exact role is uncertain. Responsible for energy coupling to the transport system. In Salmonella typhimurium (strain LT2 / SGSC1412 / ATCC 700720), this protein is Cytochrome c biogenesis ATP-binding export protein CcmA 2.